Consider the following 83-residue polypeptide: Large ribosomal subunit protein eL31 (83 aa).

Belongs to the eukaryotic ribosomal protein eL31 family.

The protein is Large ribosomal subunit protein eL31 of Methanococcus aeolicus (strain ATCC BAA-1280 / DSM 17508 / OCM 812 / Nankai-3).